Here is a 220-residue protein sequence, read N- to C-terminus: ATP-dependent dethiobiotin synthetase BioD (220 aa).

12-17 serves as a coordination point for ATP; it reads DVGKTI. Mg(2+) is bound at residue Thr-16. The active site involves Lys-37. Thr-41 provides a ligand contact to substrate. ATP-binding positions include Asp-49, 107 to 110, 167 to 168, and 197 to 199; these read EGAG, GS, and PAG. Mg(2+) is bound by residues Asp-49 and Glu-107.

Belongs to the dethiobiotin synthetase family. Homodimer. Mg(2+) is required as a cofactor.

The protein resides in the cytoplasm. The catalysed reaction is (7R,8S)-7,8-diammoniononanoate + CO2 + ATP = (4R,5S)-dethiobiotin + ADP + phosphate + 3 H(+). It participates in cofactor biosynthesis; biotin biosynthesis; biotin from 7,8-diaminononanoate: step 1/2. Its function is as follows. Catalyzes a mechanistically unusual reaction, the ATP-dependent insertion of CO2 between the N7 and N8 nitrogen atoms of 7,8-diaminopelargonic acid (DAPA, also called 7,8-diammoniononanoate) to form a ureido ring. This is ATP-dependent dethiobiotin synthetase BioD from Corynebacterium efficiens (strain DSM 44549 / YS-314 / AJ 12310 / JCM 11189 / NBRC 100395).